We begin with the raw amino-acid sequence, 46 residues long: Iota-conotoxin-like r11b (46 aa).

2 positions are modified to 4-hydroxyproline: Pro-2 and Pro-11. 4 disulfides stabilise this stretch: Cys-5-Cys-19, Cys-12-Cys-22, Cys-18-Cys-27, and Cys-21-Cys-38. Pro-29 is subject to 4-hydroxyproline. At Phe-44 the chain carries D-phenylalanine.

In terms of processing, the natural D-Phe form of the peptide is more potent than the synthetic L-Phe form. Expressed by the venom duct.

The protein resides in the secreted. Its function is as follows. Iota-conotoxins bind to voltage-gated sodium channels (Nav) and act as agonists by shifting the voltage-dependence of activation to more hyperpolarized levels. Produces excitatory symptoms when injected intracranially into mice and is lethal at higher doses. Exposure to frog cutaneous pectoris induces spontaneous and repetitive action potentials. This effect is slowly reversible. Natural peptide (with D-Phe) is active on nerve, but not on muscle. Synthetic peptide (with L-Phe) is not active on both nerve and muscle. In Conus radiatus (Rayed cone), this protein is Iota-conotoxin-like r11b.